Reading from the N-terminus, the 784-residue chain is Ent-kaurene synthase 1, chloroplastic (784 aa).

A chloroplast-targeting transit peptide spans 1–28 (MNLSLCIASPLLTKSSRPTALSAIHTAS). The Mg(2+) site is built by Asp-528, Asp-532, Asn-672, and Glu-680. The DDXXD motif signature appears at 528-532 (DDFFD).

It belongs to the terpene synthase family. It depends on Mg(2+) as a cofactor. As to expression, accumulates in leaves.

The protein localises to the plastid. Its subcellular location is the chloroplast. It catalyses the reaction ent-copalyl diphosphate = ent-kaur-16-ene + diphosphate. It functions in the pathway secondary metabolite biosynthesis; terpenoid biosynthesis. Its pathway is plant hormone biosynthesis; gibberellin biosynthesis. Involved in the biosynthesis of ent-kaurene diterpenoids natural products such as oridonin, miltiradiene, eriocalyxin B and nezukol, known to exhibit antitumor, anti-inflammatory and antibacterial activities, and in the production of gibberellins phytohormones. Catalyzes the conversion of ent-copalyl diphosphate (ent-CPP) to ent-kaurene. This is Ent-kaurene synthase 1, chloroplastic from Stevia rebaudiana (Stevia).